The chain runs to 348 residues: Protein pelota homolog (348 aa).

This sequence belongs to the eukaryotic release factor 1 family. Pelota subfamily. As to quaternary structure, monomer. A divalent metal cation serves as cofactor.

The protein resides in the cytoplasm. Functionally, may function in recognizing stalled ribosomes, interact with stem-loop structures in stalled mRNA molecules, and effect endonucleolytic cleavage of the mRNA. May play a role in the release non-functional ribosomes and degradation of damaged mRNAs. Has endoribonuclease activity. The sequence is that of Protein pelota homolog from Methanococcus maripaludis (strain C5 / ATCC BAA-1333).